A 269-amino-acid chain; its full sequence is Cytochrome c oxidase subunit 3 (269 aa).

Topologically, residues 1-22 (MTNLIRSNFQDHPFHLVSPSPW) are mitochondrial matrix. Residues 23-41 (PLNTSVCLLNLTTTGALSM) traverse the membrane as a helical segment. At 42 to 48 (HNFNNIH) the chain is on the mitochondrial intermembrane side. The helical transmembrane segment at 49 to 73 (YLYYIALIGLVSAMFLWFRDIISEG) threads the bilayer. Over 74–80 (TFLGDHT) the chain is Mitochondrial matrix. The helical transmembrane segment at 81 to 114 (LAVQRGLNLGIILFIVSEALFFLAIFWAFFHSAL) threads the bilayer. The Mitochondrial intermembrane portion of the chain corresponds to 115-137 (TPTVELGAQWPPIGIEPVNPFEL). A helical membrane pass occupies residues 138 to 161 (PLLNTVILLSSGATITYAHHALIK). Residues 162–164 (GER) are Mitochondrial matrix-facing. The helical transmembrane segment at 165–188 (EGALYGSIATILLAIIFTGFQGVE) threads the bilayer. At 189-201 (YSVSSFTISDGAF) the chain is on the mitochondrial intermembrane side. A helical membrane pass occupies residues 202 to 230 (GTCFFFSTGFHGIHVIIGTIFLAVALWRI). The Mitochondrial matrix portion of the chain corresponds to 231 to 248 (FAYHLTDNHHVGFEGGIL). A helical transmembrane segment spans residues 249-265 (YWHFVDVVWLFLYISVY). Residues 266-269 (YWGS) are Mitochondrial intermembrane-facing.

Belongs to the cytochrome c oxidase subunit 3 family. Component of the cytochrome c oxidase (complex IV, CIV), a multisubunit enzyme composed of 11 subunits. The complex is composed of a catalytic core of 3 subunits Cox1, Cox2 and Cox3, encoded in the mitochondrial DNA, and 8 supernumerary subunits Cox4, Cox5a/Cox5, Cox6, Cox7, Cox8, Cox7a/Cox9, Cox6b/Cox12 and Cox6a/Cox13, which are encoded in the nuclear genome. The complex exists as a monomer or a dimer and forms respiratory supercomplexes (SCs) in the inner mitochondrial membrane with NADH-ubiquinone oxidoreductase (complex I, CI) and ubiquinol-cytochrome c oxidoreductase (cytochrome b-c1 complex, complex III, CIII), resulting in various different assemblies (supercomplexes I(1)IV(1), I(1)III(3)IV(2), III(2)IV(1) and III(2)IV(2) as well as larger supercomplexes of compositions like I(1)III(2)IV(5-6)).

The protein resides in the mitochondrion inner membrane. It catalyses the reaction 4 Fe(II)-[cytochrome c] + O2 + 8 H(+)(in) = 4 Fe(III)-[cytochrome c] + 2 H2O + 4 H(+)(out). Functionally, component of the cytochrome c oxidase, the last enzyme in the mitochondrial electron transport chain which drives oxidative phosphorylation. The respiratory chain contains 3 multisubunit complexes succinate dehydrogenase (complex II, CII), ubiquinol-cytochrome c oxidoreductase (cytochrome b-c1 complex, complex III, CIII) and cytochrome c oxidase (complex IV, CIV), that cooperate to transfer electrons derived from NADH and succinate to molecular oxygen, creating an electrochemical gradient over the inner membrane that drives transmembrane transport and the ATP synthase. Cytochrome c oxidase is the component of the respiratory chain that catalyzes the reduction of oxygen to water. Electrons originating from reduced cytochrome c in the intermembrane space (IMS) are transferred via the dinuclear copper A center (CU(A)) of Cox2 and heme A of Cox1 to the active site in Cox1, a binuclear center (BNC) formed by heme A3 and copper B (CU(B)). The BNC reduces molecular oxygen to 2 water molecules using 4 electrons from cytochrome c in the IMS and 4 protons from the mitochondrial matrix. The sequence is that of Cytochrome c oxidase subunit 3 (cox-3) from Neurospora crassa (strain ATCC 24698 / 74-OR23-1A / CBS 708.71 / DSM 1257 / FGSC 987).